A 108-amino-acid polypeptide reads, in one-letter code: MNRRVTLGALAAAVGVGYYMTRHNRQASSRLEQKNAEIVRAVENEGQRFDKAVGETTEKAKSYLQSGKERVVDELDKPRENVKNVLSEAQAKGTEQAEALKKGTSKWF.

The residue at position 56 (T56) is a Phosphothreonine. The tract at residues 89 to 108 is disordered; that stretch reads AQAKGTEQAEALKKGTSKWF.

It localises to the cytoplasm. This is an uncharacterized protein from Schizosaccharomyces pombe (strain 972 / ATCC 24843) (Fission yeast).